The chain runs to 444 residues: Glutamyl-tRNA reductase (444 aa).

Residues 41–44 (TCNR), Ser-102, 107–109 (ERE), and Gln-113 each bind substrate. Cys-42 acts as the Nucleophile in catalysis. An NADP(+)-binding site is contributed by 181 to 186 (GTGSYA).

Belongs to the glutamyl-tRNA reductase family. As to quaternary structure, homodimer.

The catalysed reaction is (S)-4-amino-5-oxopentanoate + tRNA(Glu) + NADP(+) = L-glutamyl-tRNA(Glu) + NADPH + H(+). Its pathway is porphyrin-containing compound metabolism; protoporphyrin-IX biosynthesis; 5-aminolevulinate from L-glutamyl-tRNA(Glu): step 1/2. Catalyzes the NADPH-dependent reduction of glutamyl-tRNA(Glu) to glutamate 1-semialdehyde (GSA). The protein is Glutamyl-tRNA reductase of Cutibacterium acnes (strain DSM 16379 / KPA171202) (Propionibacterium acnes).